Here is a 390-residue protein sequence, read N- to C-terminus: L-seryl-tRNA(Sec) selenium transferase (390 aa).

An N6-(pyridoxal phosphate)lysine modification is found at K225.

Belongs to the SelA family. Requires pyridoxal 5'-phosphate as cofactor.

It localises to the cytoplasm. It carries out the reaction L-seryl-tRNA(Sec) + selenophosphate + H(+) = L-selenocysteinyl-tRNA(Sec) + phosphate. It participates in aminoacyl-tRNA biosynthesis; selenocysteinyl-tRNA(Sec) biosynthesis; selenocysteinyl-tRNA(Sec) from L-seryl-tRNA(Sec) (bacterial route): step 1/1. Converts seryl-tRNA(Sec) to selenocysteinyl-tRNA(Sec) required for selenoprotein biosynthesis. The polypeptide is L-seryl-tRNA(Sec) selenium transferase (Helicobacter pylori (strain P12)).